Here is a 347-residue protein sequence, read N- to C-terminus: Nicotinate-nucleotide--dimethylbenzimidazole phosphoribosyltransferase (347 aa).

Glutamate 316 serves as the catalytic Proton acceptor.

The protein belongs to the CobT family.

The catalysed reaction is 5,6-dimethylbenzimidazole + nicotinate beta-D-ribonucleotide = alpha-ribazole 5'-phosphate + nicotinate + H(+). It functions in the pathway nucleoside biosynthesis; alpha-ribazole biosynthesis; alpha-ribazole from 5,6-dimethylbenzimidazole: step 1/2. In terms of biological role, catalyzes the synthesis of alpha-ribazole-5'-phosphate from nicotinate mononucleotide (NAMN) and 5,6-dimethylbenzimidazole (DMB). The chain is Nicotinate-nucleotide--dimethylbenzimidazole phosphoribosyltransferase from Vibrio parahaemolyticus serotype O3:K6 (strain RIMD 2210633).